The sequence spans 346 residues: Probable WRKY transcription factor 54 (346 aa).

Residues 109 to 130 (PVSCNGGDSGESKKKRLGVGKG) are disordered. Residues 121–130 (KKKRLGVGKG) are compositionally biased toward basic residues. The segment at residues 146–214 (VEAKSSEDRY…YIGYHTCTAN (69 aa)) is a DNA-binding region (WRKY). A compositionally biased stretch (basic and acidic residues) spans 267–282 (VKEEQNNNGDQSKDYY). The interval 267–286 (VKEEQNNNGDQSKDYYEGSS) is disordered.

The protein belongs to the WRKY group III family. As to quaternary structure, interacts with WRKY30. Binds to BZR2/BES1 to cooperatively regulate the expression of target genes. Interacts with ASK7/BIN2. In terms of processing, phosphorylated and destabilized by ASK7/BIN2. As to expression, expressed in leaves.

Its subcellular location is the nucleus. Its function is as follows. Transcription factor. Interacts specifically with the W box (5'-(T)TGAC[CT]-3'), a frequently occurring elicitor-responsive cis-acting element. Together with WRKY70, negative regulator of developmental senescence, probably via the regulation of several senescence-associated markers genes. Positive regulator of EDS1-dependent defense against E.amylovora. In collaboration with WRKY70, prevents stomatal closure and, consequently, osmotic stress tolerance. Together with WRKY46 and WRKY70, promotes brassinosteroid (BR)-regulated plant growth but prevent drought response by modulating gene expression. Negative regulator of SA biosynthesis. Prevents defense response to the necrotrophic pathogens P.carotovorum and B.cinerea, but promotes defense against biotrophic/hemibiotrophic pathogens P.syringae pv. tomato (Pst) DC3000, probably by regulating negatively the jasmonic acid (JA)/ethylene (ET) and positively the salicylic acid (SA) signaling pathways. In Arabidopsis thaliana (Mouse-ear cress), this protein is Probable WRKY transcription factor 54.